The primary structure comprises 146 residues: Universal stress protein MTH_1154 (146 aa).

This sequence belongs to the universal stress protein A family.

This chain is Universal stress protein MTH_1154, found in Methanothermobacter thermautotrophicus (strain ATCC 29096 / DSM 1053 / JCM 10044 / NBRC 100330 / Delta H) (Methanobacterium thermoautotrophicum).